We begin with the raw amino-acid sequence, 240 residues long: RNA-free ribonuclease P (240 aa).

The protein belongs to the HARP family.

The enzyme catalyses Endonucleolytic cleavage of RNA, removing 5'-extranucleotides from tRNA precursor.. RNA-free RNase P that catalyzes the removal of the 5'-leader sequence from pre-tRNA to produce the mature 5'-terminus. The polypeptide is RNA-free ribonuclease P (Methanococcus aeolicus (strain ATCC BAA-1280 / DSM 17508 / OCM 812 / Nankai-3)).